Here is a 71-residue protein sequence, read N- to C-terminus: Small ribosomal subunit protein bS21 (71 aa).

Belongs to the bacterial ribosomal protein bS21 family.

This Wigglesworthia glossinidia brevipalpis protein is Small ribosomal subunit protein bS21.